We begin with the raw amino-acid sequence, 290 residues long: Porphobilinogen deaminase (290 aa).

Cys237 bears the S-(dipyrrolylmethanemethyl)cysteine mark.

It belongs to the HMBS family. As to quaternary structure, monomer. It depends on dipyrromethane as a cofactor.

It catalyses the reaction 4 porphobilinogen + H2O = hydroxymethylbilane + 4 NH4(+). The protein operates within porphyrin-containing compound metabolism; protoporphyrin-IX biosynthesis; coproporphyrinogen-III from 5-aminolevulinate: step 2/4. Its function is as follows. Tetrapolymerization of the monopyrrole PBG into the hydroxymethylbilane pre-uroporphyrinogen in several discrete steps. This chain is Porphobilinogen deaminase, found in Clostridium botulinum (strain ATCC 19397 / Type A).